A 256-amino-acid chain; its full sequence is DNA polymerase sliding clamp 2 (256 aa).

The protein belongs to the PCNA family. In terms of assembly, homotrimer. The subunits circularize to form a toroid; DNA passes through its center. Replication factor C (RFC) is required to load the toroid on the DNA.

Sliding clamp subunit that acts as a moving platform for DNA processing. Responsible for tethering the catalytic subunit of DNA polymerase and other proteins to DNA during high-speed replication. This chain is DNA polymerase sliding clamp 2, found in Pyrobaculum aerophilum (strain ATCC 51768 / DSM 7523 / JCM 9630 / CIP 104966 / NBRC 100827 / IM2).